The primary structure comprises 241 residues: 3-deoxy-D-manno-octulosonic acid kinase (241 aa).

The active site involves Asp171.

The protein belongs to the protein kinase superfamily. KdkA/RfaP family.

The protein resides in the cell inner membrane. The catalysed reaction is an alpha-Kdo-(2-&gt;6)-lipid IVA + ATP = a 4-O-phospho-alpha-Kdo-(2-&gt;6)-lipid IVA + ADP + H(+). It participates in bacterial outer membrane biogenesis; LPS core biosynthesis. Its function is as follows. Catalyzes the ATP-dependent phosphorylation of the 3-deoxy-D-manno-octulosonic acid (Kdo) residue in Kdo-lipid IV(A) at the 4-OH position. This is 3-deoxy-D-manno-octulosonic acid kinase from Haemophilus influenzae (strain PittEE).